Consider the following 474-residue polypeptide: MKLSMPRFDQAPVLVVGDVMLDRYWHGGTSRISPEAPVPVVKVDQIEDRPGGAANVALNIAALGAPASLVGVTGDDEAAESLTNSLKAAGVVARFQRIADQPTIVKLRVMSRHQQLLRIDFEEPFNTDPLALSAEVYSLLDGIKVLVLSDYGKGALKNHQALIQAARKRGIPVLADPKGKDFAIYRGASLITPNLSEFEAIVGHCEDEAQLVTKGAQLMQELDLGALLVTRGEHGMTLLRPDQQALHLPARAREVFDVTGAGDTVISTLAAAIAAGEELPHAVALANLAAGIVVGKLGTAAISAPELRRAIQREEGSERGVLGLEQLLLAVDDARAHKEKIVFTNGCFDILHAGHVTYLEQARAQGDRLIVAVNDDASVSRLKGPGRPINSVDRRMAVLAGLGAVDWVISFPEGTPENLLTHVKPDVLVKGGDYGIDQVVGADIVQAYGGEVRVLGLVENSSTTAIVEKIRGQG.

The segment at 1–318 is ribokinase; it reads MKLSMPRFDQ…RAIQREEGSE (318 aa). 194–197 serves as a coordination point for ATP; it reads NLSE. The active site involves aspartate 263. Residues 343–474 are cytidylyltransferase; the sequence is FTNGCFDILH…AIVEKIRGQG (132 aa).

In the N-terminal section; belongs to the carbohydrate kinase PfkB family. The protein in the C-terminal section; belongs to the cytidylyltransferase family. As to quaternary structure, homodimer.

It catalyses the reaction D-glycero-beta-D-manno-heptose 7-phosphate + ATP = D-glycero-beta-D-manno-heptose 1,7-bisphosphate + ADP + H(+). The enzyme catalyses D-glycero-beta-D-manno-heptose 1-phosphate + ATP + H(+) = ADP-D-glycero-beta-D-manno-heptose + diphosphate. It participates in nucleotide-sugar biosynthesis; ADP-L-glycero-beta-D-manno-heptose biosynthesis; ADP-L-glycero-beta-D-manno-heptose from D-glycero-beta-D-manno-heptose 7-phosphate: step 1/4. It functions in the pathway nucleotide-sugar biosynthesis; ADP-L-glycero-beta-D-manno-heptose biosynthesis; ADP-L-glycero-beta-D-manno-heptose from D-glycero-beta-D-manno-heptose 7-phosphate: step 3/4. In terms of biological role, catalyzes the phosphorylation of D-glycero-D-manno-heptose 7-phosphate at the C-1 position to selectively form D-glycero-beta-D-manno-heptose-1,7-bisphosphate. Functionally, catalyzes the ADP transfer from ATP to D-glycero-beta-D-manno-heptose 1-phosphate, yielding ADP-D-glycero-beta-D-manno-heptose. This is Bifunctional protein HldE from Pseudomonas syringae pv. tomato (strain ATCC BAA-871 / DC3000).